A 372-amino-acid chain; its full sequence is Aminomethyltransferase (372 aa).

It belongs to the GcvT family. As to quaternary structure, the glycine cleavage system is composed of four proteins: P, T, L and H.

The enzyme catalyses N(6)-[(R)-S(8)-aminomethyldihydrolipoyl]-L-lysyl-[protein] + (6S)-5,6,7,8-tetrahydrofolate = N(6)-[(R)-dihydrolipoyl]-L-lysyl-[protein] + (6R)-5,10-methylene-5,6,7,8-tetrahydrofolate + NH4(+). In terms of biological role, the glycine cleavage system catalyzes the degradation of glycine. The protein is Aminomethyltransferase of Paraburkholderia phymatum (strain DSM 17167 / CIP 108236 / LMG 21445 / STM815) (Burkholderia phymatum).